A 248-amino-acid polypeptide reads, in one-letter code: Phosphoadenosine 5'-phosphosulfate reductase (248 aa).

The active-site Nucleophile; cysteine thiosulfonate intermediate is the C239.

It belongs to the PAPS reductase family. CysH subfamily.

It is found in the cytoplasm. The enzyme catalyses [thioredoxin]-disulfide + sulfite + adenosine 3',5'-bisphosphate + 2 H(+) = [thioredoxin]-dithiol + 3'-phosphoadenylyl sulfate. Its pathway is sulfur metabolism; hydrogen sulfide biosynthesis; sulfite from sulfate: step 3/3. Its function is as follows. Catalyzes the formation of sulfite from phosphoadenosine 5'-phosphosulfate (PAPS) using thioredoxin as an electron donor. The chain is Phosphoadenosine 5'-phosphosulfate reductase from Alteromonas mediterranea (strain DSM 17117 / CIP 110805 / LMG 28347 / Deep ecotype).